The primary structure comprises 479 residues: Isoprimeverose transporter (479 aa).

The next 11 helical transmembrane spans lie at 54 to 74 (MFFY…LFLV), 102 to 122 (PYWL…FTVP), 131 to 151 (VWAY…NIPI), 174 to 194 (FMGT…VAYF), 205 to 225 (WFMV…IVFA), 253 to 273 (WPWV…QTRS), 289 to 309 (LASF…ITPW), 321 to 341 (LMGM…SKAL), 348 to 368 (VGTI…AVML), 397 to 417 (FGMG…GYVA), and 431 to 451 (MNYV…LLFY).

Belongs to the sodium:galactoside symporter (TC 2.A.2) family.

Its subcellular location is the cell membrane. In terms of biological role, involved in the metabolism of isoprimeverose. Transports isoprimeverose into the cell. Transport is driven by the proton motive force generated by malolactic fermentation. Cannot transport D-xylose. The chain is Isoprimeverose transporter from Lactiplantibacillus pentosus (Lactobacillus pentosus).